We begin with the raw amino-acid sequence, 1088 residues long: Serine/threonine-protein kinase 11-interacting protein (1088 aa).

LRR repeat units follow at residues 109–130, 132–152, 164–185, 187–209, 210–231, 233–254, 255–276, and 280–301; these read SLRHLELRGVPLHCLHGLRGIY, QLETLICSRSLQALEELLSAC, ALLSANFSYNALTALDSSLRLL, ALRFLNLSHNQVQDCQGFLMDLC, ELHHLDISYNRLHLVPRMGPSG, ALGVLILRGNELRSLHGLEQLR, NLRHLDLAYNLLEGHRELSPLW, and ELRKLYLEGNPLWFHPEHRAAT. Disordered regions lie at residues 335–407 and 437–533; these read GLSP…SPAG and LEPS…QKEV. Low complexity predominate over residues 346–367; that stretch reads PVGSTPETSGGPDLSDSLSSGG. A compositionally biased stretch (basic residues) spans 375-385; that stretch reads HKVKSRVRVRR. 3 positions are modified to phosphoserine: serine 387, serine 389, and serine 392. Low complexity predominate over residues 447–460; sequence TPTTSAPSAPPASS. Serine 470 is subject to Phosphoserine. The segment covering 508 to 529 has biased composition (acidic residues); the sequence is EEGEMVEQGEEEAGEEEEEEQD. At serine 599 the chain carries Phosphoserine. Disordered stretches follow at residues 724 to 780 and 978 to 1009; these read TPNR…SPPP and DAAGSPAEPSPPAASGEASEKVPPSGPGPAVR. Residues 733–742 show a composition bias toward polar residues; it reads EQSLAPSPSA. Over residues 750-759 the composition is skewed to basic and acidic residues; the sequence is GHGDHLDRAK. Serine 761, serine 773, and serine 777 each carry phosphoserine. The segment covering 978–994 has biased composition (low complexity); it reads DAAGSPAEPSPPAASGE.

It belongs to the STK11IP family. Found in a ternary complex composed of STK11/LKB1, STK11IP and SMAD4. Interacts with STK11/LKB1 and SMAD4.

It localises to the cytoplasm. May regulate STK11/LKB1 function by controlling its subcellular localization. This chain is Serine/threonine-protein kinase 11-interacting protein (STK11IP), found in Homo sapiens (Human).